A 292-amino-acid chain; its full sequence is Pantothenate synthetase (292 aa).

Position 30-37 (30-37 (MGFLHIGH)) interacts with ATP. His37 functions as the Proton donor in the catalytic mechanism. A (R)-pantoate-binding site is contributed by Gln61. Gln61 contributes to the beta-alanine binding site. Residue 147 to 150 (GEKD) coordinates ATP. Gln153 is a (R)-pantoate binding site. Residues Val176 and 184–187 (CSSR) contribute to the ATP site.

It belongs to the pantothenate synthetase family. In terms of assembly, homodimer.

The protein localises to the cytoplasm. It catalyses the reaction (R)-pantoate + beta-alanine + ATP = (R)-pantothenate + AMP + diphosphate + H(+). It functions in the pathway cofactor biosynthesis; (R)-pantothenate biosynthesis; (R)-pantothenate from (R)-pantoate and beta-alanine: step 1/1. Its function is as follows. Catalyzes the condensation of pantoate with beta-alanine in an ATP-dependent reaction via a pantoyl-adenylate intermediate. The protein is Pantothenate synthetase of Agrobacterium fabrum (strain C58 / ATCC 33970) (Agrobacterium tumefaciens (strain C58)).